The sequence spans 252 residues: Chitooligosaccharide deacetylase (252 aa).

H61 and H125 together coordinate Mg(2+).

It belongs to the YdjC deacetylase family. ChbG subfamily. Homodimer. The cofactor is Mg(2+).

The protein resides in the cytoplasm. The enzyme catalyses N,N'-diacetylchitobiose + H2O = N-acetyl-beta-D-glucosaminyl-(1-&gt;4)-D-glucosamine + acetate. The catalysed reaction is diacetylchitobiose-6'-phosphate + H2O = N'-monoacetylchitobiose-6'-phosphate + acetate. It functions in the pathway glycan degradation; chitin degradation. Involved in the degradation of chitin. ChbG is essential for growth on the acetylated chitooligosaccharides chitobiose and chitotriose but is dispensable for growth on cellobiose and chitosan dimer, the deacetylated form of chitobiose. Deacetylation of chitobiose-6-P and chitotriose-6-P is necessary for both the activation of the chb promoter by the regulatory protein ChbR and the hydrolysis of phosphorylated beta-glucosides by the phospho-beta-glucosidase ChbF. Catalyzes the removal of only one acetyl group from chitobiose-6-P to yield monoacetylchitobiose-6-P, the inducer of ChbR and the substrate of ChbF. This is Chitooligosaccharide deacetylase from Salmonella schwarzengrund (strain CVM19633).